We begin with the raw amino-acid sequence, 279 residues long: Elongation factor Ts (279 aa).

Residues 80-83 are involved in Mg(2+) ion dislocation from EF-Tu; that stretch reads TDFV.

The protein belongs to the EF-Ts family.

The protein resides in the cytoplasm. In terms of biological role, associates with the EF-Tu.GDP complex and induces the exchange of GDP to GTP. It remains bound to the aminoacyl-tRNA.EF-Tu.GTP complex up to the GTP hydrolysis stage on the ribosome. This Borreliella afzelii (strain PKo) (Borrelia afzelii) protein is Elongation factor Ts.